A 339-amino-acid polypeptide reads, in one-letter code: Biotin synthase (339 aa).

One can recognise a Radical SAM core domain in the interval 55–288 (LSEGALHSCS…GKIIKFAAGR (234 aa)). [4Fe-4S] cluster contacts are provided by Cys-73, Cys-77, and Cys-80. Residues Cys-152, Cys-213, and Lys-283 each coordinate [2Fe-2S] cluster.

Belongs to the radical SAM superfamily. Biotin synthase family. In terms of assembly, homodimer. The cofactor is [4Fe-4S] cluster. It depends on [2Fe-2S] cluster as a cofactor.

It carries out the reaction (4R,5S)-dethiobiotin + (sulfur carrier)-SH + 2 reduced [2Fe-2S]-[ferredoxin] + 2 S-adenosyl-L-methionine = (sulfur carrier)-H + biotin + 2 5'-deoxyadenosine + 2 L-methionine + 2 oxidized [2Fe-2S]-[ferredoxin]. It functions in the pathway cofactor biosynthesis; biotin biosynthesis; biotin from 7,8-diaminononanoate: step 2/2. Catalyzes the conversion of dethiobiotin (DTB) to biotin by the insertion of a sulfur atom into dethiobiotin via a radical-based mechanism. The chain is Biotin synthase from Chlorobium phaeobacteroides (strain BS1).